Here is a 1460-residue protein sequence, read N- to C-terminus: CLIP-associating protein 1-A (1460 aa).

HEAT repeat units follow at residues 87 to 124 (TQLG…QASN) and 163 to 200 (LTLS…HVGE). The tract at residues 237–293 (SDKNFDDEDSVDGNRPSSASSSASSKAPQTARRGVSLGTARRPGPSSAAAKTGGTAK) is disordered. The segment covering 279–293 (PGPSSAAAKTGGTAK) has biased composition (low complexity). 2 HEAT repeats span residues 407 to 442 (HGAE…IRHT) and 443 to 479 (HVPR…EWQT). 3 disordered regions span residues 545–605 (SDSI…IDVN), 640–733 (IRTR…RFGI), and 778–800 (PYGM…ERSY). The segment covering 550–569 (SLPQSDRSSSSSQESLNRPL) has biased composition (low complexity). The span at 571–597 (TKRSPTGSTVSRASSTTSKSTPGSLQR) shows a compositional bias: polar residues. Over residues 645–659 (QSSGSTTSTASTPAD) the composition is skewed to low complexity. Composition is skewed to polar residues over residues 669–681 (VSQS…SNSP) and 715–724 (QGCSRETSPS). Low complexity predominate over residues 789 to 800 (SDASSACSERSY). The stretch at 942 to 979 (FIVDQTQTPNLKVKVAILKYIESLARQMDPTDFVNSSE) is one HEAT 5 repeat. The tract at residues 1041–1084 (LKNSSNSSMGSPSNTIGRTPSRHSSSRASPLTSPTNCSHGGLSP) is disordered. Low complexity predominate over residues 1042–1054 (KNSSNSSMGSPSN). Over residues 1066-1078 (SRASPLTSPTNCS) the composition is skewed to polar residues. 2 HEAT repeats span residues 1272–1309 (LLLE…YAEL) and 1390–1427 (GLLQ…YLAQ).

This sequence belongs to the CLASP family.

The protein resides in the cytoplasm. It is found in the cytoskeleton. The protein localises to the microtubule organizing center. It localises to the centrosome. Its subcellular location is the chromosome. The protein resides in the centromere. It is found in the kinetochore. The protein localises to the spindle. It localises to the golgi apparatus. Its subcellular location is the trans-Golgi network. In terms of biological role, microtubule plus-end tracking protein that promotes the stabilization of dynamic microtubules during anaphase. Plays a crucial role in chromatin-induced microtubule formation. May also act at microtubule minus ends. May be involved in the nucleation of noncentrosomal microtubules originating from the trans-Golgi network (TGN). This Xenopus laevis (African clawed frog) protein is CLIP-associating protein 1-A (clasp1-a).